Consider the following 313-residue polypeptide: D-alanine--D-alanine ligase (313 aa).

Residues 108–308 (KLVWQQTGVP…YSELVVKVLS (201 aa)) enclose the ATP-grasp domain. 138–193 (VAKLGLPLFVKPASEGSSVAVLKVKTADALPAALAEAATHDKIVIVEKSIEGGGEY) is an ATP binding site. Mg(2+) is bound by residues Asp-262, Glu-275, and Asn-277.

It belongs to the D-alanine--D-alanine ligase family. Requires Mg(2+) as cofactor. The cofactor is Mn(2+).

It is found in the cytoplasm. The enzyme catalyses 2 D-alanine + ATP = D-alanyl-D-alanine + ADP + phosphate + H(+). It participates in cell wall biogenesis; peptidoglycan biosynthesis. In terms of biological role, cell wall formation. This is D-alanine--D-alanine ligase from Burkholderia cenocepacia (strain HI2424).